Consider the following 251-residue polypeptide: NADPH-dependent oxidoreductase (251 aa).

The protein belongs to the flavin oxidoreductase frp family. Requires FMN as cofactor.

Functionally, reduces FMN, organic nitro compounds and disulfide DTNB. Involved in maintenance of the cellular redox state and the disulfide stress response. The polypeptide is NADPH-dependent oxidoreductase (nfrA) (Staphylococcus aureus (strain MSSA476)).